Here is a 631-residue protein sequence, read N- to C-terminus: Phosphomethylpyrimidine synthase (631 aa).

Substrate contacts are provided by residues Asn239, Met268, Tyr297, His333, 353-355 (SRG), 394-397 (DGLR), and Glu433. Position 437 (His437) interacts with Zn(2+). Tyr460 is a substrate binding site. His501 contacts Zn(2+). [4Fe-4S] cluster is bound by residues Cys581, Cys584, and Cys589.

The protein belongs to the ThiC family. As to quaternary structure, homodimer. The cofactor is [4Fe-4S] cluster.

It carries out the reaction 5-amino-1-(5-phospho-beta-D-ribosyl)imidazole + S-adenosyl-L-methionine = 4-amino-2-methyl-5-(phosphooxymethyl)pyrimidine + CO + 5'-deoxyadenosine + formate + L-methionine + 3 H(+). Its pathway is cofactor biosynthesis; thiamine diphosphate biosynthesis. In terms of biological role, catalyzes the synthesis of the hydroxymethylpyrimidine phosphate (HMP-P) moiety of thiamine from aminoimidazole ribotide (AIR) in a radical S-adenosyl-L-methionine (SAM)-dependent reaction. This is Phosphomethylpyrimidine synthase from Salmonella agona (strain SL483).